Consider the following 209-residue polypeptide: N-acetyltransferase aca1 (209 aa).

The region spanning T26–P202 is the N-acetyltransferase domain. N118 is a binding site for substrate. R128–G133 lines the CoA pocket. A substrate-binding site is contributed by N155–L156.

It belongs to the acetyltransferase family. Homodimer.

The protein localises to the cytoplasm. Its subcellular location is the mitochondrion. It catalyses the reaction L-glutamate 5-semialdehyde + acetyl-CoA = N-acetyl-L-glutamate 5-semialdehyde + CoA + H(+). Functionally, N-acetyltransferase involved in oxidative stress resistance. Acetylates the toxic proline metabolism intermediate (S)-1-pyrroline-5-carboxylate (P5C), or more likely its spontaneously forming tautomer glutamate-5-semialdehyde (GSA) into N-acetyl-GSA for arginine synthesis in the mitochondria. P5C has been shown to increase the levels of reactive oxygen species (ROS) in the cell by inhibiting the function of the respiratory chain in the mitochondria. The enzyme is able to reduce intracellular ROS levels under P5C-induced oxidative stress and protects cells from damage by oxidative stress. Also acetylates and thereby detoxifies the proline analog azetidine-2-carboxylate (AZC), however it is unlikely that AZC is a natural substrate as it occurs only in plants belonging to the Lilaceae family. The polypeptide is N-acetyltransferase aca1 (Schizosaccharomyces pombe (strain 972 / ATCC 24843) (Fission yeast)).